The following is a 254-amino-acid chain: Metalloprotease YcaL (254 aa).

Positions 1–19 are cleaved as a signal peptide; it reads MKNTKLLLAIATSAALLTG. The N-palmitoyl cysteine moiety is linked to residue Cys20. Cys20 is lipidated: S-diacylglycerol cysteine. Residue His134 coordinates Zn(2+). Glu135 is an active-site residue. Positions 138 and 193 each coordinate Zn(2+). The segment at 227-254 is disordered; it reads GRTQSMFDSHPPSTERAQHIRDRIASGK. A compositionally biased stretch (basic and acidic residues) spans 242-254; the sequence is RAQHIRDRIASGK.

It belongs to the peptidase M48B family. Requires Zn(2+) as cofactor.

The protein localises to the cell inner membrane. Functionally, involved in the degradation of the LPS-assembly protein LptD. Degrades LptD that have engaged the Bam complex but are stalled at an early step in the outer membrane protein assembly process. The chain is Metalloprotease YcaL (ycaL) from Escherichia coli (strain K12).